We begin with the raw amino-acid sequence, 249 residues long: Proteasome subunit alpha type-7 (249 aa).

It belongs to the peptidase T1A family. As to quaternary structure, the 26S proteasome consists of a 20S proteasome core and two 19S regulatory subunits. The 20S proteasome core is composed of 28 subunits that are arranged in four stacked rings, resulting in a barrel-shaped structure. The two end rings are each formed by seven alpha subunits, and the two central rings are each formed by seven beta subunits. The catalytic chamber with the active sites is on the inside of the barrel.

It is found in the cytoplasm. Its subcellular location is the nucleus. Its function is as follows. The proteasome is a multicatalytic proteinase complex which is characterized by its ability to cleave peptides with Arg, Phe, Tyr, Leu, and Glu adjacent to the leaving group at neutral or slightly basic pH. The proteasome has an ATP-dependent proteolytic activity. The chain is Proteasome subunit alpha type-7 (PAD1) from Cicer arietinum (Chickpea).